A 443-amino-acid chain; its full sequence is GTPase Der (443 aa).

EngA-type G domains are found at residues 3–167 (PVIA…PEEK) and 176–349 (IKIA…QSIQ). Residues 9 to 16 (GRPNVGKS), 56 to 60 (DTGGL), 119 to 122 (NKAD), 182 to 189 (GRPNVGKS), 229 to 233 (DTAGI), and 294 to 297 (NKWD) contribute to the GTP site. One can recognise a KH-like domain in the interval 350–434 (QELTTGQLTR…PVHIKLKTDP (85 aa)).

Belongs to the TRAFAC class TrmE-Era-EngA-EngB-Septin-like GTPase superfamily. EngA (Der) GTPase family. As to quaternary structure, associates with the 50S ribosomal subunit.

Its function is as follows. GTPase that plays an essential role in the late steps of ribosome biogenesis. The polypeptide is GTPase Der (Coxiella burnetii (strain CbuK_Q154) (Coxiella burnetii (strain Q154))).